We begin with the raw amino-acid sequence, 496 residues long: O-acetyltransferase cpsE (496 aa).

Residues 203-217 (IGTQGQLPDGVQSSD) are compositionally biased toward polar residues. Residues 203–228 (IGTQGQLPDGVQSSDDPTDGAGDIFE) are disordered.

The protein belongs to the fumigaclavine B O-acetyltransferase family.

It carries out the reaction campesine A + acetyl-CoA = campesine C + CoA. The protein operates within alkaloid biosynthesis. Its function is as follows. O-acetyltransferase; part of the gene cluster that mediates the biosynthesis of campesine G, a dimeric indole piperazine alkaloid that shows good insecticidal activity Galleria mellonella. Within the pathway, cpsE acetylates N13 of campesine A to produce campesine C. CpsE produces an inseparable mixture of two acyl-atropisomers due to the spontaneous rotation of an acyl group at N13 of piperazine ring. The non-canonical non-ribosomal peptide synthetase cpsA catalyzes the first steps of the pathway by producing L-tryptophanal and L-valinal from their respective amino-acids. These products condensate spontaneously to form trypyl-valyl pyrazine also known as didehydrocampesine A. The NmrA-like family domain-containing oxidoreductase cpsB is the next enzyme in cps pathway and reduces the unstable didehydrocampesine A to campesine A. The methyltransferase cpsF and the acetyltransferase cpsE both recognize N13 of piperazine ring to carry out methylation and acetylation of campesine A to produce campesine C and B, respectively. The cytochrome P450 monooxygenase cpsD then acts as a dimerase that catalyzes oxidative heterocoupling between campesine B and C to produce heterodimers with unexpected 6/5/6/6/6/6/5/6 eight-ring scaffold called campesine D. Finally,the cytochrome P450 monooxygenase cpsC is a regioselective dehydrogenase that catalyzes dehydrogenation reaction towards C2-N1 to produce campesine G. In Aspergillus campestris (strain IBT 28561), this protein is O-acetyltransferase cpsE.